A 276-amino-acid polypeptide reads, in one-letter code: NADPH-dependent 7-cyano-7-deazaguanine reductase (276 aa).

83 to 85 provides a ligand contact to substrate; the sequence is IES. 85–86 lines the NADPH pocket; it reads SK. C184 (thioimide intermediate) is an active-site residue. Residue D191 is the Proton donor of the active site. 223-224 is a substrate binding site; sequence HE. An NADPH-binding site is contributed by 252-253; sequence RG.

This sequence belongs to the GTP cyclohydrolase I family. QueF type 2 subfamily. As to quaternary structure, homodimer.

It localises to the cytoplasm. The enzyme catalyses 7-aminomethyl-7-carbaguanine + 2 NADP(+) = 7-cyano-7-deazaguanine + 2 NADPH + 3 H(+). It participates in tRNA modification; tRNA-queuosine biosynthesis. Functionally, catalyzes the NADPH-dependent reduction of 7-cyano-7-deazaguanine (preQ0) to 7-aminomethyl-7-deazaguanine (preQ1). This chain is NADPH-dependent 7-cyano-7-deazaguanine reductase, found in Pseudomonas entomophila (strain L48).